The primary structure comprises 176 residues: Ribose 1,5-bisphosphate phosphokinase PhnN (176 aa).

Residue 10–17 (GPSGAGKD) participates in ATP binding.

This sequence belongs to the ribose 1,5-bisphosphokinase family.

The enzyme catalyses alpha-D-ribose 1,5-bisphosphate + ATP = 5-phospho-alpha-D-ribose 1-diphosphate + ADP. Its pathway is metabolic intermediate biosynthesis; 5-phospho-alpha-D-ribose 1-diphosphate biosynthesis; 5-phospho-alpha-D-ribose 1-diphosphate from D-ribose 5-phosphate (route II): step 3/3. Its function is as follows. Catalyzes the phosphorylation of ribose 1,5-bisphosphate to 5-phospho-D-ribosyl alpha-1-diphosphate (PRPP). The protein is Ribose 1,5-bisphosphate phosphokinase PhnN of Methylobacterium radiotolerans (strain ATCC 27329 / DSM 1819 / JCM 2831 / NBRC 15690 / NCIMB 10815 / 0-1).